Here is a 249-residue protein sequence, read N- to C-terminus: Probable transcriptional regulatory protein FN1661 (249 aa).

The segment covering 1–10 has biased composition (polar residues); it reads MSGHSKWNNI. The tract at residues 1-20 is disordered; that stretch reads MSGHSKWNNIQHRKGAQDKK.

It belongs to the TACO1 family.

It localises to the cytoplasm. The protein is Probable transcriptional regulatory protein FN1661 of Fusobacterium nucleatum subsp. nucleatum (strain ATCC 25586 / DSM 15643 / BCRC 10681 / CIP 101130 / JCM 8532 / KCTC 2640 / LMG 13131 / VPI 4355).